We begin with the raw amino-acid sequence, 101 residues long: Small ribosomal subunit protein uS14 (101 aa).

This sequence belongs to the universal ribosomal protein uS14 family. As to quaternary structure, part of the 30S ribosomal subunit. Contacts proteins S3 and S10.

Functionally, binds 16S rRNA, required for the assembly of 30S particles and may also be responsible for determining the conformation of the 16S rRNA at the A site. The protein is Small ribosomal subunit protein uS14 of Delftia acidovorans (strain DSM 14801 / SPH-1).